Here is a 395-residue protein sequence, read N- to C-terminus: Synaptotagmin-8 (395 aa).

Residues 1–44 (MQADRSMKMGHALNPFSTSAPLDATAGPSLIPDLITRIPWPRWT) are Extracellular-facing. Residues 45–65 (LFIAILAAGVLLVSCLLCVIC) form a helical; Signal-anchor for type III membrane protein membrane-spanning segment. The Cytoplasmic segment spans residues 66-395 (CYCHRHRHRK…PRLPLLRPRS (330 aa)). 2 consecutive C2 domains span residues 113–229 (QWGR…ESWY) and 241–370 (QMGE…AQWH).

The protein belongs to the synaptotagmin family. Homodimer or homooligomer. Homodimerization and homooligomerization do not depend on Ca(2+). Interacts with SYNCRIP isoform 2 C-terminus. Binds inositol 1,3,4,5-tetrakisphosphate (IP4). Binds to AP2 in a Ca(2+)-independent manner. Interacts with STX1A, STX1B and STX2; the interaction is Ca(2+)-dependent. In terms of tissue distribution, ubiquitous. Detected in testis and brain. Expressed in primary neurons, neuroendocrine and endocrine cells.

Its subcellular location is the cytoplasm. The protein localises to the cell membrane. The protein resides in the cytoplasmic vesicle. It localises to the secretory vesicle. It is found in the acrosome. In terms of biological role, involved in the trafficking and exocytosis of secretory vesicles in non-neuronal tissues. Mediates Ca(2+)-regulation of exocytosis acrosomal reaction in sperm. May mediate Ca(2+)-regulation of exocytosis in insulin secreted cells. In Mus musculus (Mouse), this protein is Synaptotagmin-8 (Syt8).